The sequence spans 823 residues: Zygotic DNA replication licensing factor mcm6 (823 aa).

The C4-type zinc finger occupies 159–186; the sequence is CLDCQTLVRDVEQQFKYTQPSICRNPVC. The MCM domain maps to 347–554; that stretch reads LYHNLCTSLF…TDYAIARRIV (208 aa). An ATP-binding site is contributed by 397–404; the sequence is GDPSTAKS. The short motif at 529–532 is the Arginine finger element; sequence SRFD. The tract at residues 666–713 is disordered; that stretch reads NLDQEDEHEAEEEPQEVINGDASVPSGVNGHVNGMNGHAEEPNAATPK. Positions 667 to 680 are enriched in acidic residues; the sequence is LDQEDEHEAEEEPQ. Residues 692 to 702 show a composition bias toward low complexity; that stretch reads GVNGHVNGMNG.

The protein belongs to the MCM family. Component of the mcm2-7 complex (RLF-M). The complex forms a toroidal hexameric ring with the proposed subunit order mcm2-mcm6-mcm4-mcm7-mcm3-mcm5. Begins to associate with zmcm3, mcm4 and mcm7 into mcm complexes at the neurula stage.

It is found in the nucleus. It carries out the reaction ATP + H2O = ADP + phosphate + H(+). In terms of biological role, acts as a component of the mcm2-7 complex (mcm complex) which is the putative replicative helicase essential for 'once per cell cycle' DNA replication initiation and elongation in eukaryotic cells. The active ATPase sites in the mcm2-7 ring are formed through the interaction surfaces of two neighboring subunits such that a critical structure of a conserved arginine finger motif is provided in trans relative to the ATP-binding site of the Walker A box of the adjacent subunit. The six ATPase active sites, however, are likely to contribute differentially to the complex helicase activity. The existence of maternal and zygotic forms of mcm3 and mcm6 suggests that specific forms of mcm2-7 complexes may be used during different stages of development. May replace mmcm6 in the mcm2-7 complex. The sequence is that of Zygotic DNA replication licensing factor mcm6 from Xenopus tropicalis (Western clawed frog).